The chain runs to 113 residues: Ribonuclease P protein component (113 aa).

This sequence belongs to the RnpA family. As to quaternary structure, consists of a catalytic RNA component (M1 or rnpB) and a protein subunit.

It carries out the reaction Endonucleolytic cleavage of RNA, removing 5'-extranucleotides from tRNA precursor.. In terms of biological role, RNaseP catalyzes the removal of the 5'-leader sequence from pre-tRNA to produce the mature 5'-terminus. It can also cleave other RNA substrates such as 4.5S RNA. The protein component plays an auxiliary but essential role in vivo by binding to the 5'-leader sequence and broadening the substrate specificity of the ribozyme. The chain is Ribonuclease P protein component from Clostridium novyi (strain NT).